The primary structure comprises 384 residues: Proteinase K (384 aa).

An N-terminal signal peptide occupies residues 1–15; sequence MRLSVLLSLLPLALG. Positions 16–105 are excised as a propeptide; sequence APAVEQRSEA…IEQDAVVTIN (90 aa). Positions 39–104 constitute an Inhibitor I9 domain; the sequence is KYIVKFKEGS…YIEQDAVVTI (66 aa). Residues 112-384 form the Peptidase S8 domain; that stretch reads PWGLARISST…NLLAYNNYQA (273 aa). Ca(2+) is bound at residue Thr-121. Cys-139 and Cys-228 are joined by a disulfide. Residues Asp-144 and His-174 each act as charge relay system in the active site. The Ca(2+) site is built by Pro-280, Val-282, and Asp-305. An intrachain disulfide couples Cys-283 to Cys-354. Ser-329 functions as the Charge relay system in the catalytic mechanism. Asp-365 is a binding site for Ca(2+).

This sequence belongs to the peptidase S8 family. It depends on Ca(2+) as a cofactor.

It carries out the reaction Hydrolysis of keratin, and of other proteins with subtilisin-like specificity. Hydrolyzes peptide amides.. Its function is as follows. Hydrolyzes keratin at aromatic and hydrophobic residues. This Parengyodontium album (Tritirachium album) protein is Proteinase K (PROK).